A 254-amino-acid chain; its full sequence is MFVDLNSDLGESFGSWKMGNDDQILPVVTSANIACGFHAGDPLGILKTVRKAVELGVTIGAHVSYPDLVGFGRRNMDLSRDELIADVLYQISALDGLAKVAGSKVQYVKPHGALYNTIAHDQAQAAAVIDAIKMYNPELVLVALAGSNLVEQARAAGLKVVSEAFADRAYNSDGSLVSRRLEGAVLHDSAFVASRVVSMLKNGGVESIDGVFTPIQADTICLHGDTDGALEMSAAIKAELVKNNIEIRPFVNKA.

The protein belongs to the LamB/PxpA family. In terms of assembly, forms a complex composed of PxpA, PxpB and PxpC.

The enzyme catalyses 5-oxo-L-proline + ATP + 2 H2O = L-glutamate + ADP + phosphate + H(+). In terms of biological role, catalyzes the cleavage of 5-oxoproline to form L-glutamate coupled to the hydrolysis of ATP to ADP and inorganic phosphate. The sequence is that of 5-oxoprolinase subunit A from Acinetobacter baumannii (strain ACICU).